Here is a 174-residue protein sequence, read N- to C-terminus: Co-chaperone protein HscB (174 aa).

The J domain occupies 2-74; it reads NYFTLFDLPR…LNRAIYFLCL (73 aa).

It belongs to the HscB family. As to quaternary structure, interacts with HscA and stimulates its ATPase activity. Interacts with IscU.

Its function is as follows. Co-chaperone involved in the maturation of iron-sulfur cluster-containing proteins. Seems to help targeting proteins to be folded toward HscA. The protein is Co-chaperone protein HscB of Buchnera aphidicola subsp. Acyrthosiphon pisum (strain Tuc7).